Consider the following 154-residue polypeptide: Cathelicidin-2 (154 aa).

Residues 1 to 17 (MLSCWVLLLALLGGVCA) form the signal peptide. A propeptide spanning residues 18–122 (LPAPLSYPQA…RCRDASSDPV (105 aa)) is cleaved from the precursor. Intrachain disulfides connect cysteine 75/cysteine 86 and cysteine 97/cysteine 114.

The protein belongs to the cathelicidin family. In terms of tissue distribution, detected in trachea, lung, proventriculus, duodenum, jejunum, ileum, caeca, colon, caecal tonsil, bursa of Fabricius, kidney, ovary, testis, thymus, liver, spleen, bone marrow, skin, uropygial gland, muscle and brain.

The protein localises to the secreted. Functionally, binds bacterial lipopolysaccharide (LPS). Has potent antimicrobial activity against Gram-positive and Gram-negative bacteria (in vitro). Has hemolytic activity (in vitro). May play a role in the innate immune response. This Gallus gallus (Chicken) protein is Cathelicidin-2 (CATHL2).